Here is a 269-residue protein sequence, read N- to C-terminus: NAD kinase (269 aa).

The active-site Proton acceptor is Asp-45. Residues 45–46 (DG), 122–123 (NE), Arg-149, Asp-151, and Ala-186 each bind NAD(+).

The protein belongs to the NAD kinase family. It depends on a divalent metal cation as a cofactor.

The protein localises to the cytoplasm. The catalysed reaction is NAD(+) + ATP = ADP + NADP(+) + H(+). Involved in the regulation of the intracellular balance of NAD and NADP, and is a key enzyme in the biosynthesis of NADP. Catalyzes specifically the phosphorylation on 2'-hydroxyl of the adenosine moiety of NAD to yield NADP. The polypeptide is NAD kinase (Staphylococcus carnosus (strain TM300)).